The primary structure comprises 421 residues: 2',3'-cyclic-nucleotide 3'-phosphodiesterase (421 aa).

Phosphoserine occurs at positions 6 and 9. Position 110 is a phosphotyrosine (Tyr110). Residue Ser170 is modified to Phosphoserine. His251 functions as the Proton acceptor in the catalytic mechanism. Thr253 lines the substrate pocket. His330 functions as the Proton donor in the catalytic mechanism. Position 332 (Thr332) interacts with substrate. Ser359 bears the Phosphoserine mark. At Cys418 the chain carries Cysteine methyl ester. The S-farnesyl cysteine moiety is linked to residue Cys418. Positions 419–421 are cleaved as a propeptide — removed in mature form; that stretch reads TII.

The protein belongs to the 2H phosphoesterase superfamily. CNPase family. Exists as monomers and homodimers.

It is found in the membrane. It localises to the melanosome. The catalysed reaction is a nucleoside 2',3'-cyclic phosphate + H2O = a nucleoside 2'-phosphate + H(+). Functionally, catalyzes the formation of 2'-nucleotide products from 2',3'-cyclic substrates. May participate in RNA metabolism in the myelinating cell, CNP is the third most abundant protein in central nervous system myelin. In Homo sapiens (Human), this protein is 2',3'-cyclic-nucleotide 3'-phosphodiesterase.